Consider the following 520-residue polypeptide: Keratin, type II cytoskeletal 78 (520 aa).

The tract at residues 1–110 (MSLSPCRAQR…DPQFQVVRTQ (110 aa)) is head. A coil 1A region spans residues 111–146 (ETQEIRTLNNQFASFIDKVRFLEQQNKVLETKWHLL). Residues 111–424 (ETQEIRTLNN…RLLEGEECRM (314 aa)) enclose the IF rod domain. The linker 1 stretch occupies residues 147-165 (QQQGLSGSQQGLEPVFEAC). Positions 166–258 (LDQLRKQLEQ…LNEEELGQLQ (93 aa)) are coil 1B. The interval 259 to 281 (TQASDTSVVLSMDNNRYLDFSSI) is linker 12. The coil 2 stretch occupies residues 282–421 (ITEVRARYEE…TYRRLLEGEE (140 aa)). Residues 422–520 (CRMSGECTSQ…ESSLKTSITY (99 aa)) are tail.

It belongs to the intermediate filament family. As to quaternary structure, heterotetramer of two type I and two type II keratins. In non-keratinising esophageal and vaginal epithelium, strongly expressed in the basal and parabasal/lower suprabasal cell layers with considerably decreased expression in the mid/upper suprabasal layers (at protein level). A similar gradient from basal to lower suprabasal layers is seen in the partially keratinised dorsal tongue epithelium, in the scalp and in the plantar epidermis (at protein level). Extension of expression into the suprabasal compartments is distinctly more pronounced in non-keratinising epithelia than in keratinising epithelia and epidermis (at protein level). In scalp sections, present in the interfollicular epidermis and infundibulum including the entire outer root sheath of the hair follicles and also in the sebocytes (at protein level). In sweat glands, expressed in peripheral and luminal cells of the lower duct and in peripheral cells of the middle/upper duct with no expression observed in luminal cells (at protein level). In embryos at the 14th week of pregnancy, detected in basal and parabasal layers but is absent from the uppermost epidermal layer (at protein level). Expressed in tongue epithelium.

This Homo sapiens (Human) protein is Keratin, type II cytoskeletal 78 (KRT78).